The primary structure comprises 253 residues: MRICSDQPCIVLLTEKDVWIRVNGKEPISLKANHMALLNCENNIIDVSSLNNTLVAHISHDIIKDYLRFLNKDLSQIPVWQRSATPILTLPCLTPDVFRVAAQHSMMPAETESEKERTRALLFTVLSRFLDSKKFVSLMMYMLRNCVSDSVYQIIESDIHKDWNLSMVASCLCLSPSLLKKKLKSENTSYSQIITTCRMRYAVNELMMDGKNISQVSQSCGYNSTSYFISVFKDFYGMTPLHYVSQHRERTVA.

The HTH araC/xylS-type domain maps to 149–246 (DSVYQIIESD…GMTPLHYVSQ (98 aa)). 2 DNA-binding regions (H-T-H motif) span residues 166–187 (SMVA…KSEN) and 213–236 (ISQV…KDFY).

The protein is HTH-type transcriptional regulator AdiY (adiY) of Escherichia coli (strain K12).